The chain runs to 334 residues: Fructose-1,6-bisphosphatase class 1 (334 aa).

Residues E87, D106, L108, and D109 each coordinate Mg(2+). Residues 109-112 (DGSS), N208, and K274 each bind substrate. Residue E280 coordinates Mg(2+).

The protein belongs to the FBPase class 1 family. As to quaternary structure, homotetramer. Mg(2+) is required as a cofactor.

It is found in the cytoplasm. It carries out the reaction beta-D-fructose 1,6-bisphosphate + H2O = beta-D-fructose 6-phosphate + phosphate. It functions in the pathway carbohydrate biosynthesis; gluconeogenesis. This chain is Fructose-1,6-bisphosphatase class 1, found in Psychrobacter sp. (strain PRwf-1).